The sequence spans 308 residues: Protein translocase subunit SecF (308 aa).

The next 6 membrane-spanning stretches (helical) occupy residues 23–42 (VSYS…IGIY), 140–160 (IEAG…YIGV), 164–184 (WYFG…ALGF), 194–214 (LSTI…SVVI), 246–266 (ILTV…GGKA), and 272–292 (VLVF…SAPI).

The protein belongs to the SecD/SecF family. SecF subfamily. As to quaternary structure, forms a complex with SecD. Part of the essential Sec protein translocation apparatus which comprises SecA, SecYEG and auxiliary proteins SecDF-YajC and YidC.

It is found in the cell inner membrane. Functionally, part of the Sec protein translocase complex. Interacts with the SecYEG preprotein conducting channel. SecDF uses the proton motive force (PMF) to complete protein translocation after the ATP-dependent function of SecA. In Rickettsia typhi (strain ATCC VR-144 / Wilmington), this protein is Protein translocase subunit SecF.